Here is a 213-residue protein sequence, read N- to C-terminus: Citrate synthase, mitochondrial (213 aa).

His74 is an active-site residue. 2 positions are modified to N6-acetyllysine; alternate: Lys94 and Lys100. An N6-succinyllysine; alternate mark is found at Lys94 and Lys100. His120 is an active-site residue. Residue Arg129 coordinates oxaloacetate. Lys148 carries the N6-acetyllysine; alternate modification. An N6-succinyllysine; alternate modification is found at Lys148. Lys155 is subject to N6-acetyllysine. Lys166 bears the N6-acetyllysine; alternate mark. Lys166 carries the N6-succinyllysine; alternate modification. Lys168 carries the N6,N6,N6-trimethyllysine modification. The active site involves Asp175. Arg201 is an oxaloacetate binding site.

It belongs to the citrate synthase family. As to quaternary structure, homodimer. In response to mitochondrial stress, the precursor protein is ubiquitinated by the SIFI complex in the cytoplasm before mitochondrial import, leading to its degradation. Within the SIFI complex, UBR4 initiates ubiquitin chain that are further elongated or branched by KCMF1.

It is found in the mitochondrion matrix. It catalyses the reaction oxaloacetate + acetyl-CoA + H2O = citrate + CoA + H(+). The protein operates within carbohydrate metabolism; tricarboxylic acid cycle; isocitrate from oxaloacetate: step 1/2. Functionally, key enzyme of the Krebs tricarboxylic acid cycle which catalyzes the synthesis of citrate from acetyl coenzyme A and oxaloacetate. The chain is Citrate synthase, mitochondrial from Mesocricetus auratus (Golden hamster).